Consider the following 149-residue polypeptide: UPF0178 protein Cphy_3042 (149 aa).

Over residues 112 to 128 the composition is skewed to basic residues; the sequence is QRRHGKQNLHSKNNKKR. A disordered region spans residues 112–132; it reads QRRHGKQNLHSKNNKKRTTGD.

It belongs to the UPF0178 family.

This is UPF0178 protein Cphy_3042 from Lachnoclostridium phytofermentans (strain ATCC 700394 / DSM 18823 / ISDg) (Clostridium phytofermentans).